Consider the following 198-residue polypeptide: Protein ORFi in retron Ec67 (198 aa).

It belongs to the CI repressor protein family.

The protein is Protein ORFi in retron Ec67 of Escherichia coli.